The sequence spans 597 residues: NADPH-dependent diflavin oxidoreductase 1 (597 aa).

One can recognise a Flavodoxin-like domain in the interval 6-150 (LLVLFGSQTG…AIDPWLQDLW (145 aa)). FMN-binding positions include 12–17 (SQTGTA), 59–62 (ATTG), 97–106 (LGDSSYAKFN), and Asp-132. Positions 206–446 (LQPFLAPMVS…WVRSGGLTFP (241 aa)) constitute an FAD-binding FR-type domain. FAD is bound by residues Arg-350, 382–385 (RAFS), and 416–419 (GLCS). NADP(+) is bound by residues Thr-460, 515-516 (SR), 521-525 (KVYVQ), and Asp-558. Trp-596 is an FAD binding site.

The protein belongs to the NADPH-dependent diflavin oxidoreductase NDOR1 family. This sequence in the N-terminal section; belongs to the flavodoxin family. In the C-terminal section; belongs to the flavoprotein pyridine nucleotide cytochrome reductase family. Interacts with CIAPIN1; as part of the cytosolic iron-sulfur (Fe-S) protein assembly (CIA) machinery. Interacts with DCPS. Requires FAD as cofactor. The cofactor is FMN.

It is found in the cytoplasm. Its subcellular location is the perinuclear region. The catalysed reaction is 2 oxidized [2Fe-2S]-[protein] + NADPH = 2 reduced [2Fe-2S]-[protein] + NADP(+) + H(+). NADPH-dependent reductase which is a central component of the cytosolic iron-sulfur (Fe-S) protein assembly (CIA) machinery. Transfers electrons from NADPH via its FAD and FMN prosthetic groups to the [2Fe-2S] cluster of CIAPIN1, another key component of the CIA machinery. In turn, this reduced cluster provides electrons for assembly of cytosolic iron-sulfur cluster proteins. It can also reduce the [2Fe-2S] cluster of CISD1 and activate this protein implicated in Fe/S cluster repair. In vitro can fully activate methionine synthase/MTR in the presence of soluble cytochrome b5/CYB5A. This chain is NADPH-dependent diflavin oxidoreductase 1, found in Bos taurus (Bovine).